The sequence spans 229 residues: MKQLIHNDWWEVLKPQFESAYYAQLHNFLKEEYTHQTIYPEMHHIFEAFEWTPFSKVKVVILGQDPYHGPNQAHGCSFSVLPGVPVPPSLQNIYKELQSDLGCTPVNHGYLKKWADQGVLLLNSVLTVRAGQAYSHRGHGWEQLTDAAIHALSERPKPVVFILWGRAARNKKQLINTKTNIVLESAHPSPLSANRGFFGSRPFSKTNEALQAMGEQPIDWQLPAEPNYR.

D65 (proton acceptor) is an active-site residue.

The protein belongs to the uracil-DNA glycosylase (UDG) superfamily. UNG family.

It localises to the cytoplasm. It carries out the reaction Hydrolyzes single-stranded DNA or mismatched double-stranded DNA and polynucleotides, releasing free uracil.. Excises uracil residues from the DNA which can arise as a result of misincorporation of dUMP residues by DNA polymerase or due to deamination of cytosine. The chain is Uracil-DNA glycosylase from Limosilactobacillus reuteri (strain DSM 20016) (Lactobacillus reuteri).